Consider the following 357-residue polypeptide: Probable cinnamyl alcohol dehydrogenase 7/8 (357 aa).

Cysteine 47 is a binding site for Zn(2+). Serine 49 lines the NADP(+) pocket. The Zn(2+) site is built by histidine 69, glutamate 70, cysteine 100, cysteine 103, cysteine 106, cysteine 114, and cysteine 163. Residues threonine 167, 188–193 (GLGGVG), 211–216 (SSSDKK), threonine 251, glycine 275, and 298–300 (SFI) each bind NADP(+).

The protein belongs to the zinc-containing alcohol dehydrogenase family. As to quaternary structure, homodimer. Zn(2+) serves as cofactor.

It catalyses the reaction (E)-cinnamyl alcohol + NADP(+) = (E)-cinnamaldehyde + NADPH + H(+). It carries out the reaction (E)-coniferol + NADP(+) = (E)-coniferaldehyde + NADPH + H(+). The enzyme catalyses (E)-sinapyl alcohol + NADP(+) = (E)-sinapaldehyde + NADPH + H(+). The catalysed reaction is (E)-4-coumaroyl alcohol + NADP(+) = (E)-4-coumaraldehyde + NADPH + H(+). It catalyses the reaction (E)-caffeyl alcohol + NADP(+) = (E)-caffeyl aldehyde + NADPH + H(+). Its pathway is aromatic compound metabolism; phenylpropanoid biosynthesis. Involved in lignin biosynthesis. Catalyzes the final step specific for the production of lignin monomers. Catalyzes the NADPH-dependent reduction of coniferaldehyde, 5-hydroxyconiferaldehyde, sinapaldehyde, 4-coumaraldehyde and caffeyl aldehyde to their respective alcohols. This chain is Probable cinnamyl alcohol dehydrogenase 7/8 (CAD7), found in Picea abies (Norway spruce).